The sequence spans 103 residues: Interleukin-8 (103 aa).

The N-terminal stretch at 1-25 (MTSKLAVAFLAVFLLSAALCEAAVL) is a signal peptide. The residue at position 27 (Arg-27) is a Citrulline. 2 disulfides stabilise this stretch: Cys-34–Cys-61 and Cys-36–Cys-77.

This sequence belongs to the intercrine alpha (chemokine CxC) family. As to quaternary structure, homodimer. Interacts with TNFAIP6 (via Link domain); this interaction interferes with chemokine binding to glycosaminoglycans. Post-translationally, citrullination at Arg-27 prevents proteolysis, and dampens tissue inflammation, it also enhances leukocytosis, possibly through impaired chemokine clearance from the blood circulation. Alveolar macrophages.

It is found in the secreted. Chemotactic factor that mediates inflammatory response by attracting neutrophils, basophils, and T-cells to clear pathogens and protect the host from infection. Also plays an important role in neutrophil activation. Released in response to an inflammatory stimulus, exerts its effect by binding to the G-protein-coupled receptors CXCR1 and CXCR2, primarily found in neutrophils, monocytes and endothelial cells. G-protein heterotrimer (alpha, beta, gamma subunits) constitutively binds to CXCR1/CXCR2 receptor and activation by IL8 leads to beta and gamma subunits release from Galpha (GNAI2 in neutrophils) and activation of several downstream signaling pathways including PI3K and MAPK pathways. The chain is Interleukin-8 (CXCL8) from Sus scrofa (Pig).